The following is a 183-amino-acid chain: CyanoP (183 aa).

The signal sequence occupies residues 1 to 19; the sequence is MLQRFFATALAIFVVLLGG. A lipid anchor (N-palmitoyl cysteine) is attached at C20. Residue C20 is the site of S-diacylglycerol cysteine attachment. Zn(2+) is bound by residues D31, D34, D54, H58, T63, E87, D91, H142, E163, and E164.

The protein belongs to the PsbP family. CyanoP subfamily. In terms of assembly, monomer. Present in very small amounts in PSII. Zn(2+) serves as cofactor.

The protein resides in the cellular thylakoid membrane. Functionally, plays a role in the early stages of photosystem II (PSII) assembly; binds to D2 (psbD) and may facilitate its incorporation into PSII. Present in less than 1% of PSII preparations. The protein is CyanoP of Thermosynechococcus vestitus (strain NIES-2133 / IAM M-273 / BP-1).